The sequence spans 474 residues: C6 finger domain transcription factor aclZ (474 aa).

Positions 42 to 69 (CNQCHAAKVRCSGERTGCDRCNNLQYQC) form a DNA-binding region, zn(2)-C6 fungal-type. 2 disordered regions span residues 85-148 (RGNK…SHSA) and 177-206 (MSSD…DSHT). The segment covering 90–105 (VRTTTEALQRPATAST) has biased composition (polar residues). The segment covering 117-138 (TDQRSENDPLSRSDFGEQDAAH) has biased composition (basic and acidic residues).

The protein resides in the nucleus. In terms of biological role, transcription factor that specifically regulates the gene cluster that mediates the biosynthesis of aspirochlorine (or antibiotic A30641), an unusual halogenated spiro compound with distinctive antifungal properties due to selective inhibition of protein biosynthesis, and which is also active against bacteria, viruses, and murine tumor cells. In Aspergillus oryzae (strain ATCC 42149 / RIB 40) (Yellow koji mold), this protein is C6 finger domain transcription factor aclZ.